The primary structure comprises 319 residues: Plastid lipid-associated protein 2, chloroplastic (319 aa).

A chloroplast-targeting transit peptide spans 1 to 59 (MATVQFFNQFPCKTRVQSSANSKPLSKPPSSLVPMSALTRRPSFPPGEFAVSRSDFRVR). Residues 17 to 39 (QSSANSKPLSKPPSSLVPMSALT) are disordered. Residues 18 to 36 (SSANSKPLSKPPSSLVPMS) show a composition bias toward low complexity.

It belongs to the PAP/fibrillin family. As to expression, expressed almost exclusively in petals. Very weak expression in all other organs.

The protein resides in the plastid. Its subcellular location is the chloroplast. Its function is as follows. May stabilize the accumulated carotenoid structures. The sequence is that of Plastid lipid-associated protein 2, chloroplastic (PAP2) from Brassica campestris (Field mustard).